Here is a 347-residue protein sequence, read N- to C-terminus: NADH-ubiquinone oxidoreductase chain 2 (347 aa).

Transmembrane regions (helical) follow at residues 3–23, 25–45, 59–79, 96–116, 148–170, 178–198, 200–220, 247–267, 276–296, and 326–346; these read PLIL…VMMS, HWLM…PLLM, YFLT…INLL, IIMT…FWVP, GINL…WGGL, ILAY…AFNP, MTLL…MLFM, IMLS…WMII, ITLA…YMRL, and LPML…ITLL.

This sequence belongs to the complex I subunit 2 family. In terms of assembly, core subunit of respiratory chain NADH dehydrogenase (Complex I) which is composed of 45 different subunits. Interacts with TMEM242.

It localises to the mitochondrion inner membrane. The catalysed reaction is a ubiquinone + NADH + 5 H(+)(in) = a ubiquinol + NAD(+) + 4 H(+)(out). In terms of biological role, core subunit of the mitochondrial membrane respiratory chain NADH dehydrogenase (Complex I) which catalyzes electron transfer from NADH through the respiratory chain, using ubiquinone as an electron acceptor. Essential for the catalytic activity and assembly of complex I. In Saccopteryx leptura (Lesser sac-winged bat), this protein is NADH-ubiquinone oxidoreductase chain 2.